Reading from the N-terminus, the 209-residue chain is Max dimerization protein 4 (209 aa).

An interaction with SIN3A and SIN3B region spans residues 6–23 (LLILLEAAEYLERRDREA). The bHLH domain maps to 53–105 (NNRSSHNELEKHRRAKLRLYLEQLKQLVPLGPDSTRHTTLSLLKRAKVHIKKL). A disordered region spans residues 140–209 (RVRTDSTGSA…CRRLGRPALS (70 aa)). Over residues 153–163 (DDSEQEVDIEG) the composition is skewed to acidic residues. A compositionally biased stretch (basic residues) spans 199 to 209 (HCRRLGRPALS).

In terms of assembly, efficient DNA binding requires dimerization with another bHLH protein. Binds DNA as a heterodimer with MAX. Interacts with SIN3A AND SIN3B. Interacts with RNF17.

The protein resides in the nucleus. Its function is as follows. Transcriptional repressor. Binds with MAX to form a sequence-specific DNA-binding protein complex which recognizes the core sequence 5'-CAC[GA]TG-3'. Antagonizes MYC transcriptional activity by competing for MAX and suppresses MYC dependent cell transformation. The chain is Max dimerization protein 4 (MXD4) from Homo sapiens (Human).